Here is a 682-residue protein sequence, read N- to C-terminus: Potassium-transporting ATPase ATP-binding subunit (682 aa).

Helical transmembrane passes span 34–54 (PVMF…IAMA), 62–82 (ALFS…ANFA), 219–239 (IALT…TATL), and 254–274 (VLVA…LSAI). Residue aspartate 307 is the 4-aspartylphosphate intermediate of the active site. Residues aspartate 344, glutamate 348, 377–384 (FTAQSRMS), and lysine 395 contribute to the ATP site. Mg(2+)-binding residues include aspartate 518 and aspartate 522. A run of 3 helical transmembrane segments spans residues 588 to 608 (FAII…LNIM), 616 to 636 (AILS…PLAL), and 656 to 676 (IYGL…DLLL).

Belongs to the cation transport ATPase (P-type) (TC 3.A.3) family. Type IA subfamily. The system is composed of three essential subunits: KdpA, KdpB and KdpC.

Its subcellular location is the cell inner membrane. The enzyme catalyses K(+)(out) + ATP + H2O = K(+)(in) + ADP + phosphate + H(+). Part of the high-affinity ATP-driven potassium transport (or Kdp) system, which catalyzes the hydrolysis of ATP coupled with the electrogenic transport of potassium into the cytoplasm. This subunit is responsible for energy coupling to the transport system and for the release of the potassium ions to the cytoplasm. The sequence is that of Potassium-transporting ATPase ATP-binding subunit from Escherichia coli O157:H7 (strain EC4115 / EHEC).